The chain runs to 1050 residues: Beta-galactosidase (1050 aa).

Substrate is bound by residues asparagine 110 and aspartate 209. Na(+) is bound at residue aspartate 209. Mg(2+) contacts are provided by glutamate 432, histidine 434, and glutamate 477. Substrate contacts are provided by residues glutamate 477 and 553–556 (EYAH). The active-site Proton donor is the glutamate 477. The active-site Nucleophile is glutamate 553. Residue asparagine 613 coordinates Mg(2+). Na(+)-binding residues include phenylalanine 617 and asparagine 620. Substrate contacts are provided by asparagine 620 and tryptophan 1023.

The protein belongs to the glycosyl hydrolase 2 family. In terms of assembly, homotetramer. It depends on Mg(2+) as a cofactor. The cofactor is Na(+).

It carries out the reaction Hydrolysis of terminal non-reducing beta-D-galactose residues in beta-D-galactosides.. This is Beta-galactosidase from Yersinia enterocolitica serotype O:8 / biotype 1B (strain NCTC 13174 / 8081).